The chain runs to 609 residues: Glutamine--fructose-6-phosphate aminotransferase [isomerizing] (609 aa).

Cysteine 2 (nucleophile; for GATase activity) is an active-site residue. One can recognise a Glutamine amidotransferase type-2 domain in the interval 2–218; sequence CGIVGAVAQR…EGDVAEVTRR (217 aa). 2 SIS domains span residues 286–426 and 458–599; these read AAEF…HNGM and LAED…VDQP. The active-site For Fru-6P isomerization activity is lysine 604.

Homodimer.

It localises to the cytoplasm. It catalyses the reaction D-fructose 6-phosphate + L-glutamine = D-glucosamine 6-phosphate + L-glutamate. Functionally, catalyzes the first step in hexosamine metabolism, converting fructose-6P into glucosamine-6P using glutamine as a nitrogen source. This chain is Glutamine--fructose-6-phosphate aminotransferase [isomerizing], found in Shewanella oneidensis (strain ATCC 700550 / JCM 31522 / CIP 106686 / LMG 19005 / NCIMB 14063 / MR-1).